A 230-amino-acid polypeptide reads, in one-letter code: Ureidoacrylate amidohydrolase RutB (230 aa).

Residue Asp24 is the Proton acceptor of the active site. Lys133 is a catalytic residue. The active-site Nucleophile is the Cys166.

The protein belongs to the isochorismatase family. RutB subfamily.

The enzyme catalyses (Z)-3-ureidoacrylate + H2O + H(+) = (Z)-3-aminoacrylate + NH4(+) + CO2. The catalysed reaction is (Z)-3-ureidoacrylate + H2O = (Z)-3-aminoacrylate + carbamate + H(+). It catalyses the reaction (Z)-2-methylureidoacrylate + H2O + H(+) = (Z)-2-methylaminoacrylate + NH4(+) + CO2. In terms of biological role, hydrolyzes ureidoacrylate to form aminoacrylate and carbamate. The carbamate hydrolyzes spontaneously, thereby releasing one of the nitrogen atoms of the pyrimidine ring as ammonia and one of its carbon atoms as CO2. This is Ureidoacrylate amidohydrolase RutB from Escherichia coli O103:H2 (strain 12009 / EHEC).